A 219-amino-acid chain; its full sequence is Large ribosomal subunit protein uL3 (219 aa).

The protein belongs to the universal ribosomal protein uL3 family. As to quaternary structure, part of the 50S ribosomal subunit. Forms a cluster with proteins L14 and L19.

Its function is as follows. One of the primary rRNA binding proteins, it binds directly near the 3'-end of the 23S rRNA, where it nucleates assembly of the 50S subunit. This Salinispora arenicola (strain CNS-205) protein is Large ribosomal subunit protein uL3.